The primary structure comprises 288 residues: MFSTTLINTFSLGLLAVVSVVAAPGGISVGPISIGPGGISLGPGGISIGPGGINLGPGGGPGAINAGPAAVNLGTAGNYAILAKSGISTVPESIISGNIGVSPISTTAFTGFSETLDSTGKFATSQQVVGELFAASFAAPTPTTLTTAVSDMQTAFNDATGRVTPDFTNLGGGELGGLVLTPGLYKWTGAVSVNSTGVTIAGTPLDHFIFQIPATLGFAAASRVTLVGGIPASNIVWAATSVVTAGAGSHIEGVVLAKTAVTLETGATMNGRILAQTFVALQSATVIG.

Residues 1 to 22 (MFSTTLINTFSLGLLAVVSVVA) form the signal peptide. 2 short sequence motifs (ice-binding site motif (T-A/G-X-T/N)) span residues 75–78 (TAGN) and 154–157 (TAFN). Asn-194 is a glycosylation site (N-linked (GlcNAc...) asparagine). 2 short sequence motifs (ice-binding site motif (T-A/G-X-T/N)) span residues 196–199 (TGVT) and 265–268 (TGAT).

The protein belongs to the ice-binding protein family.

It is found in the secreted. Binds ice crystals and most probably inhibits their growth in order to prevent cell damage from extracellular ice. In Lentinula edodes (Shiitake mushroom), this protein is Ice-binding protein.